The following is a 229-amino-acid chain: MDMSSAESVKSVVTDPKLVEERRHQIISAATKLFSEQGYYTTTILQIAREAKVSTGLIYQYFGDKDDILFLTLKNVLDTYEQEIPRQIEGLTHPVERLCHAVWAYCAVVDAQRDATVLAYRSTKSLRADRRVLIKDGETRTNRMIEKSIRACTAGGFMRPVNEYLLCYQIVNFAHAWALKHWAFVDRFSLAEYVEEGLLLLVEPFLTAKGKTAMAKVPRSAEALVREPT.

The 61-residue stretch at 20 to 80 (EERRHQIISA…LTLKNVLDTY (61 aa)) folds into the HTH tetR-type domain. The H-T-H motif DNA-binding region spans 43-62 (TILQIAREAKVSTGLIYQYF).

As to quaternary structure, homodimer in solution.

Activity is regulated by the effector molecules 3-hydroxybenzoyl-CoA and benzoyl-CoA, which bind to HbdR, alleviating its repression on the three target promoters and inducing the expression of the hbd genes. In terms of biological role, transcriptional regulator that controls the expression of the hbd cluster, which contains three catabolic operons and is responsible for the anaerobic degradation of 3-hydroxybenzoate. HbdR suppresses the activity of the three catabolic promoters (PhbdN, PhbdE and PhbdH) by binding to a conserved palindromic operator box. In addition, it slightly increases activity of its own promoter (PhbdR). The HbdR-mediated repression of hbd genes may play a crucial biological role in maintaining requisite hydroxybenzoate levels in the cell. The polypeptide is HTH-type transcriptional regulator HbdR (Aromatoleum sp. (strain CIB) (Azoarcus sp. (strain CIB))).